We begin with the raw amino-acid sequence, 210 residues long: Large ribosomal subunit protein bL25 (210 aa).

The interval 186–210 is disordered; sequence ISSASTEKEAESNQESTSTTPSSES. Over residues 198–210 the composition is skewed to low complexity; it reads NQESTSTTPSSES.

The protein belongs to the bacterial ribosomal protein bL25 family. CTC subfamily. As to quaternary structure, part of the 50S ribosomal subunit; part of the 5S rRNA/L5/L18/L25 subcomplex. Contacts the 5S rRNA. Binds to the 5S rRNA independently of L5 and L18.

In terms of biological role, this is one of the proteins that binds to the 5S RNA in the ribosome where it forms part of the central protuberance. The protein is Large ribosomal subunit protein bL25 of Ehrlichia chaffeensis (strain ATCC CRL-10679 / Arkansas).